A 354-amino-acid chain; its full sequence is Serum paraoxonase/arylesterase 2 (354 aa).

Cysteines 42 and 352 form a disulfide. Ca(2+) is bound by residues Glu-53 and Asp-54. The active-site Proton acceptor is His-114. Ca(2+) contacts are provided by Ile-116, Asn-167, Asp-168, and Asn-223. Asn-254 is a glycosylation site (N-linked (GlcNAc...) asparagine). Ca(2+) contacts are provided by Asp-268 and Asn-269. 2 N-linked (GlcNAc...) asparagine glycosylation sites follow: Asn-269 and Asn-323.

This sequence belongs to the paraoxonase family. As to quaternary structure, homotrimer. The cofactor is Ca(2+). Glycosylated. Post-translationally, the signal sequence is not cleaved.

It localises to the membrane. The catalysed reaction is a phenyl acetate + H2O = a phenol + acetate + H(+). The enzyme catalyses an N-acyl-L-homoserine lactone + H2O = an N-acyl-L-homoserine + H(+). Its function is as follows. Capable of hydrolyzing lactones and a number of aromatic carboxylic acid esters. This chain is Serum paraoxonase/arylesterase 2 (Pon2), found in Rattus norvegicus (Rat).